Reading from the N-terminus, the 351-residue chain is Prohormone-2 (351 aa).

The signal sequence occupies residues 1 to 21; it reads MMCDWVWLLLTLCSLLMIVQS. 2 propeptides span residues 22-177 and 192-319; these read LPTN…QTQV and ELDI…MISR. Residues 51–69 show a composition bias toward polar residues; it reads GNQQNHQPENNPSSSYSST. Disordered regions lie at residues 51–71 and 136–176; these read GNQQ…STAE and NEDR…VQTQ. Basic and acidic residues predominate over residues 136 to 145; it reads NEDRRKRSEK. The span at 158–176 shows a compositional bias: low complexity; that stretch reads PSTTSFQSPTSTQQSVQTQ.

Its subcellular location is the secreted. The polypeptide is Prohormone-2 (Apis mellifera (Honeybee)).